The following is a 34-amino-acid chain: Potassium channel toxin alpha-KTx 6.13 (34 aa).

Disulfide bonds link cysteine 3-cysteine 24, cysteine 9-cysteine 29, cysteine 13-cysteine 31, and cysteine 19-cysteine 34. Cysteine 34 carries the post-translational modification Cysteine amide.

This sequence belongs to the short scorpion toxin superfamily. Potassium channel inhibitor family. Alpha-KTx 06 subfamily. In terms of tissue distribution, expressed by the venom gland.

The protein resides in the secreted. Functionally, antagonist of Kv1/KCNA potassium channels. Shows a weak interaction with muscle-type nicotinic acetylcholine receptors (nAChR), since it inhibits alpha-bungarotoxin binding to both muscle-type nAChR from T.californica (IC(50)=490 nM). This suggests it probably weakly inhibits nAChR. This chain is Potassium channel toxin alpha-KTx 6.13, found in Heterometrus spinifer (Asia giant forest scorpion).